A 193-amino-acid chain; its full sequence is Xanthine phosphoribosyltransferase (193 aa).

Positions 20 and 27 each coordinate xanthine. Residue 128 to 132 (ANGQA) participates in 5-phospho-alpha-D-ribose 1-diphosphate binding. Lys-156 is a xanthine binding site.

Belongs to the purine/pyrimidine phosphoribosyltransferase family. Xpt subfamily. In terms of assembly, homodimer.

The protein resides in the cytoplasm. The catalysed reaction is XMP + diphosphate = xanthine + 5-phospho-alpha-D-ribose 1-diphosphate. It functions in the pathway purine metabolism; XMP biosynthesis via salvage pathway; XMP from xanthine: step 1/1. Its function is as follows. Converts the preformed base xanthine, a product of nucleic acid breakdown, to xanthosine 5'-monophosphate (XMP), so it can be reused for RNA or DNA synthesis. This chain is Xanthine phosphoribosyltransferase, found in Streptococcus pneumoniae serotype 4 (strain ATCC BAA-334 / TIGR4).